The primary structure comprises 230 residues: uncharacterized protein (230 aa).

Transmembrane regions (helical) follow at residues 34–54 (FFAGSLLLATIGALLGLMNFQ), 56–76 (VVQYKWVFFIAEIAAFFGLMF), 87–107 (MLFAFTSLSGVTLVPLLGMVI), 111–131 (GLGAIWQALGMTTIVFGLMSV), 146–166 (MLFIALIVVVVCSLINLFLGS), 167–187 (PMFQVVIAGASAILFSLYIAY), and 205–225 (VSLYLDFLNVFISILQIIGIF).

Belongs to the BI1 family.

The protein resides in the cell membrane. This is an uncharacterized protein from Helicobacter pylori (strain ATCC 700392 / 26695) (Campylobacter pylori).